The following is a 215-amino-acid chain: Octanoyltransferase (215 aa).

Positions 31 to 206 constitute a BPL/LPL catalytic domain; it reads PDSQDEIWLV…QLVKHLDYAE (176 aa). Substrate contacts are provided by residues 70 to 77, 137 to 139, and 150 to 152; these read RGGQVTYH, SLG, and GLA. Residue cysteine 168 is the Acyl-thioester intermediate of the active site.

Belongs to the LipB family.

It is found in the cytoplasm. The catalysed reaction is octanoyl-[ACP] + L-lysyl-[protein] = N(6)-octanoyl-L-lysyl-[protein] + holo-[ACP] + H(+). It participates in protein modification; protein lipoylation via endogenous pathway; protein N(6)-(lipoyl)lysine from octanoyl-[acyl-carrier-protein]: step 1/2. Its function is as follows. Catalyzes the transfer of endogenously produced octanoic acid from octanoyl-acyl-carrier-protein onto the lipoyl domains of lipoate-dependent enzymes. Lipoyl-ACP can also act as a substrate although octanoyl-ACP is likely to be the physiological substrate. The polypeptide is Octanoyltransferase (Pseudomonas putida (strain ATCC 700007 / DSM 6899 / JCM 31910 / BCRC 17059 / LMG 24140 / F1)).